The primary structure comprises 305 residues: Glycine--tRNA ligase alpha subunit (305 aa).

The protein belongs to the class-II aminoacyl-tRNA synthetase family. Tetramer of two alpha and two beta subunits.

It localises to the cytoplasm. The enzyme catalyses tRNA(Gly) + glycine + ATP = glycyl-tRNA(Gly) + AMP + diphosphate. In Streptococcus pneumoniae (strain Hungary19A-6), this protein is Glycine--tRNA ligase alpha subunit.